The chain runs to 100 residues: Small ribosomal subunit protein uS14c (100 aa).

The protein belongs to the universal ribosomal protein uS14 family. In terms of assembly, part of the 30S ribosomal subunit.

Its subcellular location is the plastid. It is found in the chloroplast. Its function is as follows. Binds 16S rRNA, required for the assembly of 30S particles. The chain is Small ribosomal subunit protein uS14c from Pelargonium hortorum (Common geranium).